Here is a 301-residue protein sequence, read N- to C-terminus: Probable 5-dehydro-4-deoxyglucarate dehydratase (301 aa).

It belongs to the DapA family.

It catalyses the reaction 5-dehydro-4-deoxy-D-glucarate + H(+) = 2,5-dioxopentanoate + CO2 + H2O. The protein operates within carbohydrate acid metabolism; D-glucarate degradation; 2,5-dioxopentanoate from D-glucarate: step 2/2. This is Probable 5-dehydro-4-deoxyglucarate dehydratase from Rhizobium meliloti (strain 1021) (Ensifer meliloti).